Consider the following 440-residue polypeptide: MNPSQILENLKKELNENEYENYLSNLKFNEKQSKADLLVFNAPNELMAKFIQTKYGKKIAHFYEVQSGNKAIINIQAQSAKQSNKSTKIDIAHIKAQSTILNPSFTFDSFVVGDSNKYAYGACKAITHKDKLGKLYNPIFVYGPTGLGKTHLLQAVGNASLEMGKKVIYATSENFINDFTSNLKNGSLDKFHEKYRNCDVLLIDDVQFLGKTDKIQEEFFFIFNEIKNNDGQIIMTSDNPPNMLKGITERLKSRFAHGIIADITPPQLDTKIAIIRKKCEFNDINLSNDIINYIATSLGDNIREIEGIIISLNAYATILGQEITLELAKSVMKDHIKEKKENITIDDILSLVCKEFNIKPSDVKSNKKTQNIVTARRIVIYLARALTALTMPQLANYFEMKDHTAISHNVKKITEMIENDASLKAKIEELKNKILVKSQS.

The interval 1-74 (MNPSQILENL…VQSGNKAIIN (74 aa)) is domain I, interacts with DnaA modulators. The tract at residues 74–99 (NIQAQSAKQSNKSTKIDIAHIKAQST) is domain II. The domain III, AAA+ region stretch occupies residues 100 to 316 (ILNPSFTFDS…GIIISLNAYA (217 aa)). Gly-146, Gly-148, Lys-149, and Thr-150 together coordinate ATP. Positions 317 to 440 (TILGQEITLE…KNKILVKSQS (124 aa)) are domain IV, binds dsDNA.

The protein belongs to the DnaA family. As to quaternary structure, oligomerizes as a right-handed, spiral filament on DNA at oriC.

The protein localises to the cytoplasm. Functionally, plays an essential role in the initiation and regulation of chromosomal replication. ATP-DnaA binds to the origin of replication (oriC) to initiate formation of the DNA replication initiation complex once per cell cycle. Binds the DnaA box (a 9 base pair repeat at the origin) and separates the double-stranded (ds)DNA. Forms a right-handed helical filament on oriC DNA; dsDNA binds to the exterior of the filament while single-stranded (ss)DNA is stabiized in the filament's interior. The ATP-DnaA-oriC complex binds and stabilizes one strand of the AT-rich DNA unwinding element (DUE), permitting loading of DNA polymerase. After initiation quickly degrades to an ADP-DnaA complex that is not apt for DNA replication. Binds acidic phospholipids. This Campylobacter jejuni subsp. jejuni serotype O:23/36 (strain 81-176) protein is Chromosomal replication initiator protein DnaA.